Reading from the N-terminus, the 261-residue chain is Small ribosomal subunit protein uS2 (261 aa).

This sequence belongs to the universal ribosomal protein uS2 family.

In Rhodospirillum centenum (strain ATCC 51521 / SW), this protein is Small ribosomal subunit protein uS2.